A 123-amino-acid chain; its full sequence is Integration host factor subunit alpha (123 aa).

Belongs to the bacterial histone-like protein family. In terms of assembly, heterodimer of an alpha and a beta chain.

This protein is one of the two subunits of integration host factor, a specific DNA-binding protein that functions in genetic recombination as well as in transcriptional and translational control. This Polaromonas naphthalenivorans (strain CJ2) protein is Integration host factor subunit alpha.